We begin with the raw amino-acid sequence, 182 residues long: Ribosome-recycling factor (182 aa).

It belongs to the RRF family.

It is found in the cytoplasm. Its function is as follows. Responsible for the release of ribosomes from messenger RNA at the termination of protein biosynthesis. May increase the efficiency of translation by recycling ribosomes from one round of translation to another. The polypeptide is Ribosome-recycling factor (Prochlorococcus marinus subsp. pastoris (strain CCMP1986 / NIES-2087 / MED4)).